The following is a 390-amino-acid chain: MAAQTDFWDAIVIGAGIQGCFTAYHLAKHSKSVLLLEQFFLPHSRGSSHGQSRIIRKAYPEDFYTMMMKECYQTWAQLEREAGTQLHRQTELLLLGTKENPGLKTIQATLSRQGIDHEYLSSVDLKQRFPNIRFTRGEVGLLDKTGGVLYADKALRALQHIICQLGGTVCDGEKVVEIRPGLPVTVKTTLKSYQANSLVITAGPWTNRLLHPLGIELPLQTLRINVCYWREKVPGSYGVSQAFPCILGLDLAPHHIYGLPASEYPGLMKICYHHGDNVDPEERDCPKTFSDIQDVQILCHFVRDHLPGLRAEPDIMERCMYTNTPDEHFILDCHPKYDNIVIGAGFSGHGFKLAPVVGKILYELSMKLPPSYDLAPFRMSRFSTLSKAHL.

FAD is bound at residue D9–F39. N6-acetyllysine is present on residues K126 and K287. Residue C319 is modified to S-8alpha-FAD cysteine. A Microbody targeting signal motif is present at residues A388–L390.

This sequence belongs to the MSOX/MTOX family. FAD is required as a cofactor. In terms of tissue distribution, kidney and liver.

Its subcellular location is the peroxisome. It catalyses the reaction sarcosine + O2 + H2O = formaldehyde + glycine + H2O2. It carries out the reaction L-pipecolate + O2 = L-1-piperideine-6-carboxylate + H2O2 + H(+). In terms of biological role, metabolizes sarcosine, L-pipecolic acid and L-proline. In Mus musculus (Mouse), this protein is Peroxisomal sarcosine oxidase (Pipox).